Reading from the N-terminus, the 247-residue chain is DNA polymerase epsilon subunit D (247 aa).

A disordered region spans residues 128 to 247 (KKHKADKKVP…EGQNSSDDDS (120 aa)). A compositionally biased stretch (basic and acidic residues) spans 150–159 (RLKDNDEQII). 3 stretches are compositionally biased toward acidic residues: residues 165–188 (ADME…NDED), 196–215 (EEEE…EVEE), and 224–247 (EEDE…DDDS).

In terms of assembly, heterotetramer. Consists of four subunits: POL2, DPB2, DPB3 and DPB4.

The protein localises to the nucleus. Functionally, as accessory component of the DNA polymerase epsilon (DNA polymerase II) participates in chromosomal DNA replication. The polypeptide is DNA polymerase epsilon subunit D (DPB4) (Debaryomyces hansenii (strain ATCC 36239 / CBS 767 / BCRC 21394 / JCM 1990 / NBRC 0083 / IGC 2968) (Yeast)).